The primary structure comprises 40 residues: uncharacterized protein (40 aa).

Residues 20 to 37 (TYLYWTAVTAAYLTYLTI) traverse the membrane as a helical segment.

The protein resides in the membrane. This is an uncharacterized protein from Archaeoglobus fulgidus (strain ATCC 49558 / DSM 4304 / JCM 9628 / NBRC 100126 / VC-16).